Consider the following 253-residue polypeptide: 5'-nucleotidase SurE (253 aa).

A divalent metal cation-binding residues include aspartate 8, aspartate 9, serine 40, and asparagine 93.

The protein belongs to the SurE nucleotidase family. Requires a divalent metal cation as cofactor.

The protein localises to the cytoplasm. It catalyses the reaction a ribonucleoside 5'-phosphate + H2O = a ribonucleoside + phosphate. Nucleotidase that shows phosphatase activity on nucleoside 5'-monophosphates. This is 5'-nucleotidase SurE from Methylobacterium nodulans (strain LMG 21967 / CNCM I-2342 / ORS 2060).